Consider the following 158-residue polypeptide: UPF0262 protein RHOS4_22360 (158 aa).

The protein belongs to the UPF0262 family.

This chain is UPF0262 protein RHOS4_22360, found in Cereibacter sphaeroides (strain ATCC 17023 / DSM 158 / JCM 6121 / CCUG 31486 / LMG 2827 / NBRC 12203 / NCIMB 8253 / ATH 2.4.1.) (Rhodobacter sphaeroides).